The sequence spans 343 residues: Heat-inducible transcription repressor HrcA (343 aa).

Belongs to the HrcA family.

Functionally, negative regulator of class I heat shock genes (grpE-dnaK-dnaJ and groELS operons). Prevents heat-shock induction of these operons. The chain is Heat-inducible transcription repressor HrcA from Mycolicibacterium vanbaalenii (strain DSM 7251 / JCM 13017 / BCRC 16820 / KCTC 9966 / NRRL B-24157 / PYR-1) (Mycobacterium vanbaalenii).